Reading from the N-terminus, the 67-residue chain is UPF0253 protein VS_2370 (67 aa).

It belongs to the UPF0253 family.

This is UPF0253 protein VS_2370 from Vibrio atlanticus (strain LGP32) (Vibrio splendidus (strain Mel32)).